The primary structure comprises 399 residues: Interferon regulatory factor 9 (399 aa).

The segment at residues 9–116 is a DNA-binding region (IRF tryptophan pentad repeat); that stretch reads TRKLRSWIVE…EPYKVYRILP (108 aa). The disordered stretch occupies residues 118 to 189; it reads GTLPNQPRNQ…CNSELEEGAG (72 aa). The segment covering 120-129 has biased composition (polar residues); it reads LPNQPRNQKS. Serine 139 bears the Phosphoserine mark. A compositionally biased stretch (polar residues) spans 148 to 157; it reads NGRTNGVVNH. The segment covering 171–189 has biased composition (low complexity); that stretch reads SNRSDSNSNCNSELEEGAG. The residue at position 393 (serine 393) is a Phosphoserine.

Belongs to the IRF family. Interacts with STAT2 in the cytoplasm. Forms the interferon-stimulated gene factor 3 complex (ISGF3) with the heterodimer STAT1:STAT2; upon stimulation.

It is found in the nucleus. Functionally, transcription factor that plays an essential role in anti-viral immunity. It mediates signaling by type I IFNs (IFN-alpha and IFN-beta). Following type I IFN binding to cell surface receptors, Jak kinases (TYK2 and JAK1) are activated, leading to tyrosine phosphorylation of STAT1 and STAT2. IRF9/ISGF3G associates with the phosphorylated STAT1:STAT2 dimer to form a complex termed ISGF3 transcription factor, that enters the nucleus. ISGF3 binds to the IFN stimulated response element (ISRE) to activate the transcription of interferon stimulated genes, which drive the cell in an antiviral state. This is Interferon regulatory factor 9 (Irf9) from Mus musculus (Mouse).